Here is a 358-residue protein sequence, read N- to C-terminus: Magnesium-protoporphyrin IX monomethyl ester [oxidative] cyclase 2 (358 aa).

The protein belongs to the AcsF family. It depends on Fe cation as a cofactor.

The enzyme catalyses Mg-protoporphyrin IX 13-monomethyl ester + 3 NADPH + 3 O2 + 2 H(+) = 3,8-divinyl protochlorophyllide a + 3 NADP(+) + 5 H2O. The protein operates within porphyrin-containing compound metabolism; chlorophyll biosynthesis (light-independent). In terms of biological role, catalyzes the formation of the isocyclic ring in chlorophyll biosynthesis. Mediates the cyclase reaction, which results in the formation of divinylprotochlorophyllide (Pchlide) characteristic of all chlorophylls from magnesium-protoporphyrin IX 13-monomethyl ester (MgPMME). The chain is Magnesium-protoporphyrin IX monomethyl ester [oxidative] cyclase 2 from Synechocystis sp. (strain ATCC 27184 / PCC 6803 / Kazusa).